A 436-amino-acid polypeptide reads, in one-letter code: GTPase Der (436 aa).

EngA-type G domains follow at residues 4-167 (PTVA…PVEE) and 175-351 (IRFS…ESQN). Residues 10–17 (GRPNVGKS), 57–61 (DTGGI), 119–122 (NKVD), 181–188 (GRPNVGKS), 229–233 (DTAGM), and 294–297 (NKWD) each bind GTP. The KH-like domain occupies 352–436 (KRIPSAVLND…PINLIARKRK (85 aa)).

It belongs to the TRAFAC class TrmE-Era-EngA-EngB-Septin-like GTPase superfamily. EngA (Der) GTPase family. As to quaternary structure, associates with the 50S ribosomal subunit.

Its function is as follows. GTPase that plays an essential role in the late steps of ribosome biogenesis. This Streptococcus agalactiae serotype III (strain NEM316) protein is GTPase Der.